The sequence spans 640 residues: UvrABC system protein C (640 aa).

The 79-residue stretch at 35 to 113 folds into the GIY-YIG domain; the sequence is DAPGVYRMIG…IKQLKPRFNV (79 aa). Positions 223–258 constitute a UVR domain; it reads RAVMATMAKAMEEAAEELEFERAARLRDRIRALSAV.

This sequence belongs to the UvrC family. As to quaternary structure, interacts with UvrB in an incision complex.

The protein resides in the cytoplasm. Functionally, the UvrABC repair system catalyzes the recognition and processing of DNA lesions. UvrC both incises the 5' and 3' sides of the lesion. The N-terminal half is responsible for the 3' incision and the C-terminal half is responsible for the 5' incision. In Caulobacter vibrioides (strain ATCC 19089 / CIP 103742 / CB 15) (Caulobacter crescentus), this protein is UvrABC system protein C.